A 508-amino-acid chain; its full sequence is Phenylalanine--tRNA ligase alpha subunit (508 aa).

Alanine 2 bears the N-acetylalanine mark. Phosphoserine occurs at positions 193 and 301. Lysine 311 is subject to N6-acetyllysine. L-phenylalanine contacts are provided by residues threonine 329, 372–374 (QIE), and tyrosine 412. Glutamate 414 contacts Mg(2+). Phenylalanine 438 lines the L-phenylalanine pocket.

Belongs to the class-II aminoacyl-tRNA synthetase family. Phe-tRNA synthetase alpha subunit type 2 subfamily. As to quaternary structure, heterotetramer; dimer of two heterodimers formed by FARSA and FARSB. Mg(2+) is required as a cofactor.

It is found in the cytoplasm. The enzyme catalyses tRNA(Phe) + L-phenylalanine + ATP = L-phenylalanyl-tRNA(Phe) + AMP + diphosphate + H(+). The polypeptide is Phenylalanine--tRNA ligase alpha subunit (Farsa) (Rattus norvegicus (Rat)).